Here is a 478-residue protein sequence, read N- to C-terminus: Probable cytosolic Fe-S cluster assembly factor CPIJ010948 (478 aa).

Cysteine 23, cysteine 69, cysteine 72, cysteine 75, cysteine 189, cysteine 245, cysteine 396, and cysteine 400 together coordinate [4Fe-4S] cluster.

The protein belongs to the NARF family.

Its function is as follows. Component of the cytosolic iron-sulfur (Fe/S) protein assembly machinery. Required for maturation of extramitochondrial Fe/S proteins. This chain is Probable cytosolic Fe-S cluster assembly factor CPIJ010948, found in Culex quinquefasciatus (Southern house mosquito).